The sequence spans 748 residues: Wings apart-like protein homolog 1 (748 aa).

Disordered stretches follow at residues 23–199 (TLAQ…VYAT) and 614–644 (EGGCGDEEEEEEGGDESSDEDGVRKDGRLDR). Positions 35 to 64 (PSVRSSDSPDVPDTPDVPVNQLSSPPLSLP) are enriched in low complexity. Composition is skewed to polar residues over residues 68–79 (SEGNAETLQNLS) and 87–96 (LSQSSTSSLN). Positions 172-182 (ISSSSNRYSSR) are enriched in low complexity. A WAPL domain is found at 205–723 (KPLASGYGSR…KRLYDFTKAT (519 aa)). Residues 616 to 633 (GCGDEEEEEEGGDESSDE) show a composition bias toward acidic residues. Positions 634 to 644 (DGVRKDGRLDR) are enriched in basic and acidic residues.

The protein belongs to the WAPL family.

It localises to the nucleus. Functionally, regulator of meiotic chromosome structure and function, playing a role in sister chromatid cohesion, possibly via antagonizing the coh-3/-4 association with axial elements in nuclei during late prophase, cohesin association with chromatin, DNA double strand break repair and polar body positioning following meiotic divisions during oogenesis. Regulates the morphogenesis and temporal assembly of axial elements to control the organization of meiotic chromosomes in pachytene nuclei and is also involved in meiotic chromosomal remodeling in late pachytene nuclei. Required for the removal of the cohesin component scc-1 from mitotic chromosomes. The sequence is that of Wings apart-like protein homolog 1 from Caenorhabditis elegans.